A 933-amino-acid polypeptide reads, in one-letter code: Neuronal PAS domain-containing protein 4A (933 aa).

A basic motif; degenerate region spans residues Met-1–Arg-13. A bHLH domain is found at Met-1–Ser-53. A helix-loop-helix motif region spans residues Asp-14–Ser-53. 2 PAS domains span residues Ser-74–Asp-148 and Thr-220–Gly-290. In terms of domain architecture, PAC spans Ala-295–Thr-334. Polar residues predominate over residues Gln-361 to Cys-398. Disordered regions lie at residues Gln-361–Pro-451, Gly-514–Leu-573, and Asp-750–Pro-776. Composition is skewed to low complexity over residues Ser-399–Ser-411, Glu-440–Pro-451, Gly-538–Gln-560, and Leu-751–Pro-769.

In terms of assembly, efficient DNA binding requires dimerization with another bHLH protein. In terms of tissue distribution, brain-specific.

The protein resides in the nucleus. Transcription factor expressed in neurons of the brain that regulates the excitatory-inhibitory balance within neural circuits and is required for contextual memory in the hippocampus. Plays a key role in the structural and functional plasticity of neurons. Acts as an early-response transcription factor in both excitatory and inhibitory neurons, where it induces distinct but overlapping sets of late-response genes in these two types of neurons, allowing the synapses that form on inhibitory and excitatory neurons to be modified by neuronal activity in a manner specific to their function within a circuit, thereby facilitating appropriate circuit responses to sensory experience. This Danio rerio (Zebrafish) protein is Neuronal PAS domain-containing protein 4A (npas4a).